The following is a 223-amino-acid chain: Ubiquitin-conjugating enzyme E2 S-A (223 aa).

In terms of domain architecture, UBC core spans 11–157 (HIIRLVYKEV…ARLLTEIHGG (147 aa)). The active-site Glycyl thioester intermediate is the cysteine 95. Residues 170–223 (QDLASGASASSADPMIPGVLGGAEGPMAKKHAGERDKKLAAKKKLDKKRALRRL) form a disordered region. A compositionally biased stretch (basic residues) spans 209–223 (AAKKKLDKKRALRRL).

This sequence belongs to the ubiquitin-conjugating enzyme family.

The enzyme catalyses S-ubiquitinyl-[E1 ubiquitin-activating enzyme]-L-cysteine + [E2 ubiquitin-conjugating enzyme]-L-cysteine = [E1 ubiquitin-activating enzyme]-L-cysteine + S-ubiquitinyl-[E2 ubiquitin-conjugating enzyme]-L-cysteine.. Its pathway is protein modification; protein ubiquitination. Catalyzes the covalent attachment of ubiquitin to other proteins. Acts as an essential factor of the anaphase promoting complex/cyclosome (APC/C), a cell cycle-regulated ubiquitin ligase that controls progression through mitosis. Acts by specifically elongating 'Lys-11'-linked polyubiquitin chains initiated by the E2 enzyme ube2c/ubch10 on APC/C substrates, enhancing the degradation of APC/C substrates by the proteasome and promoting mitotic exit. The protein is Ubiquitin-conjugating enzyme E2 S-A (ube2s-a) of Xenopus laevis (African clawed frog).